We begin with the raw amino-acid sequence, 388 residues long: MRHCGWLLGLLSLFSLATHASDWQEIKNEAKGQTVWFNAWGGDTAINRYLDWVSGEMKTHYAINLKIVRLADAADAVKRIQTEAAAGRKTGGSVDLLWVNGENFRTLKEANLLQTGWAETLPNWRYVDTQLPVREDFSVPTQGAESPWGGAQLTFIARRDVTPQPPQTPQALLEFAKANPGTVTYPRPPDFTGTAFLEQLLIMLTPDPAALKEAPDDATFARVTAPLWQYLDVLHPYLWREGKDFPPSPARMDALLKAGTLRLSLTFNPAHAQQKIASGDLPASSYSFGFREGMIGNVHFVTIPANANASAAAKVVANFLLSPDAQLRKADPAVWGDPSVLDPQKLPDGQRESLQSRMPQDLPPVLAEPHAGWVNALEQEWLHRYGTH.

The tract at residues 333-357 (AVWGDPSVLDPQKLPDGQRESLQSR) is disordered.

This chain is Protein YnjB (ynjB), found in Escherichia coli (strain K12).